A 368-amino-acid polypeptide reads, in one-letter code: F-box protein At3g17710 (368 aa).

One can recognise an F-box domain in the interval 1–46 (MASVKLPWDLEEEILSRLPPRSLVRFRTVCKHWNGLFSDKRFVKKH).

In Arabidopsis thaliana (Mouse-ear cress), this protein is F-box protein At3g17710.